The chain runs to 415 residues: Serine hydroxymethyltransferase (415 aa).

Residues L119 and 123–125 contribute to the (6S)-5,6,7,8-tetrahydrofolate site; that span reads GHL. At K228 the chain carries N6-(pyridoxal phosphate)lysine. (6S)-5,6,7,8-tetrahydrofolate is bound at residue 353–355; that stretch reads SPF.

The protein belongs to the SHMT family. In terms of assembly, homodimer. Pyridoxal 5'-phosphate is required as a cofactor.

It is found in the cytoplasm. It carries out the reaction (6R)-5,10-methylene-5,6,7,8-tetrahydrofolate + glycine + H2O = (6S)-5,6,7,8-tetrahydrofolate + L-serine. Its pathway is one-carbon metabolism; tetrahydrofolate interconversion. It participates in amino-acid biosynthesis; glycine biosynthesis; glycine from L-serine: step 1/1. Its function is as follows. Catalyzes the reversible interconversion of serine and glycine with tetrahydrofolate (THF) serving as the one-carbon carrier. Also exhibits THF-independent aldolase activity toward beta-hydroxyamino acids, producing glycine and aldehydes, via a retro-aldol mechanism. The protein is Serine hydroxymethyltransferase of Halorubrum lacusprofundi (strain ATCC 49239 / DSM 5036 / JCM 8891 / ACAM 34).